The primary structure comprises 140 residues: ATP synthase epsilon chain (140 aa).

This sequence belongs to the ATPase epsilon chain family. In terms of assembly, F-type ATPases have 2 components, CF(1) - the catalytic core - and CF(0) - the membrane proton channel. CF(1) has five subunits: alpha(3), beta(3), gamma(1), delta(1), epsilon(1). CF(0) has three main subunits: a, b and c.

It localises to the cell inner membrane. Its function is as follows. Produces ATP from ADP in the presence of a proton gradient across the membrane. This chain is ATP synthase epsilon chain, found in Neisseria meningitidis serogroup B (strain ATCC BAA-335 / MC58).